Here is a 534-residue protein sequence, read N- to C-terminus: Origin of replication complex subunit 5 (534 aa).

Positions 1–36 (MPPKEESSKVTRRSTRSSASVTVENSEPIESHTPTI) are disordered. Residue 83-90 (GGASTGKT) participates in ATP binding. The Nuclear localization signal signature appears at 129-136 (HRKCSLNG). The disordered stretch occupies residues 397-428 (MFDSTGGMDNRKRKRKASEKSMEKKEIAEQEA). Basic and acidic residues predominate over residues 414-424 (SEKSMEKKEIA).

The protein belongs to the ORC5 family. As to quaternary structure, component of the origin recognition complex (ORC) composed of at least ORC1 (ORC1A or ORC1B), ORC2, ORC3, ORC4, ORC5 and ORC6. ORC is regulated in a cell-cycle and development dependent manner. It is sequentially assembled at the exit from anaphase of mitosis and disassembled as cells enter S phase. Interacts directly with ORC1A, ORC1B, ORC2, ORC3, ORC4 and ORC6. As to expression, follow a cell-cycle regulation with a peak at the G1/S-phase. Mostly expressed in flower buds and cauline leaves, and, to a lower exent, in roots, leaves and stems. Expressed at low levels ubiquitously.

It is found in the nucleus. Component of the origin recognition complex (ORC) that binds origins of replication. DNA-binding is ATP-dependent. The specific DNA sequences that define origins of replication have not been identified yet. ORC is required to assemble the pre-replication complex necessary to initiate DNA replication. The sequence is that of Origin of replication complex subunit 5 from Arabidopsis thaliana (Mouse-ear cress).